The sequence spans 98 residues: Cell division protein FtsB (98 aa).

Residues 1–3 are Cytoplasmic-facing; it reads MKR. A helical membrane pass occupies residues 4–21; sequence LLIVLIALLAMLEYRLWF. The Periplasmic portion of the chain corresponds to 22–98; that stretch reads GDKSLAESFH…GGERDKPSND (77 aa). A coiled-coil region spans residues 31-74; it reads HLQEQIKLQQQSNAQLVARNQILREEISDLRSGTEALEERARNE.

The protein belongs to the FtsB family. Part of a complex composed of FtsB, FtsL and FtsQ.

The protein localises to the cell inner membrane. Essential cell division protein. May link together the upstream cell division proteins, which are predominantly cytoplasmic, with the downstream cell division proteins, which are predominantly periplasmic. This is Cell division protein FtsB from Shewanella halifaxensis (strain HAW-EB4).